The chain runs to 364 residues: Melatonin receptor type 1B (364 aa).

Residues 1 to 42 (MPENSSIPNCCEASGLAARPSWSGSAGARPPVTARAPWVAPM) lie on the Extracellular side of the membrane. The N-linked (GlcNAc...) asparagine glycan is linked to N4. Residues 43–63 (LSTVVVVTTAVDFVGNLLVIL) form a helical membrane-spanning segment. Over 64 to 76 (SVLRNRKLRNAGN) the chain is Cytoplasmic. A helical transmembrane segment spans residues 77–97 (LFVVSLALADLVIALYPYPLI). Topologically, residues 98–115 (LVAIIRDGWVLGEAHCKA) are extracellular. A disulfide bridge links C113 with C190. A helical transmembrane segment spans residues 116–136 (SAFVMGLSVIGSVFNITAIAI). At 137-155 (NRYCCICHSTTYHRVCSHW) the chain is on the cytoplasmic side. A helical membrane pass occupies residues 156–176 (YTPIYISLVWLLTLVALVPNF). Topologically, residues 177-200 (FVGSLEYDPRIYSCTFIQTASTQY) are extracellular. Residues 201-221 (TAAVVAIHFLLPMAVVSFCYL) traverse the membrane as a helical segment. Over 222–253 (RIWVLVLQARRKAKATRKLRLRPSDLRSFLTM) the chain is Cytoplasmic. The chain crosses the membrane as a helical span at residues 254 to 274 (FAVFVVFAICWAPLNCIGLAV). Residues 275 to 287 (AINPEAMALQVPE) lie on the Extracellular side of the membrane. Residues 288 to 308 (GLFVTSYFLAYFNSCLNAIVY) traverse the membrane as a helical segment. The Cytoplasmic segment spans residues 309-364 (GLLNQNFRREYKRILLAIWNTRRCIQHASKHCLTEERQGPTPPAARATVPVKEGAL). The segment at 343-364 (EERQGPTPPAARATVPVKEGAL) is disordered. A compositionally biased stretch (low complexity) spans 352 to 364 (AARATVPVKEGAL).

The protein belongs to the G-protein coupled receptor 1 family.

The protein localises to the cell membrane. Its function is as follows. High affinity receptor for melatonin. The activity of this receptor is mediated by pertussis toxin sensitive G proteins that inhibits adenylate cyclase activity. The protein is Melatonin receptor type 1B (Mtnr1b) of Mus musculus (Mouse).